The following is a 663-amino-acid chain: Pyoverdine export ATP-binding/permease protein PvdT (663 aa).

The ABC transporter domain maps to Ile-11–Gln-250. Gly-48–Ser-55 serves as a coordination point for ATP. 4 helical membrane passes run Ala-292–Gly-312, Ile-545–Val-565, Val-598–Gly-618, and Leu-626–Met-646.

The protein belongs to the ABC transporter superfamily. Macrolide exporter (TC 3.A.1.122) family. In terms of assembly, part of the tripartite efflux system PvdRT-OpmQ, which is composed of an inner membrane component with both ATPase and permease domains, PvdT, a periplasmic membrane fusion protein, PvdR, and an outer membrane component, OpmQ.

Its subcellular location is the cell inner membrane. Functionally, part of the tripartite efflux system PvdRT-OpmQ required for the secretion into the extracellular milieu of the siderophore pyoverdine (PVD), which is involved in iron acquisition. This subunit binds PVD and drives its secretion by hydrolyzing ATP. The system is responsible for export of newly synthesized PVD after the final steps of biosynthesis have taken place in the periplasm. It is also responsible for recycling of PVD after internalization of ferri-PVD into the periplasm by the outer-membrane receptor FpvA and release of iron from PVD, thus making PVD available for new cycles of iron uptake. In addition, can expel unwanted metals complexed with PVD from the periplasm into the extracellular medium. The sequence is that of Pyoverdine export ATP-binding/permease protein PvdT from Pseudomonas aeruginosa (strain ATCC 15692 / DSM 22644 / CIP 104116 / JCM 14847 / LMG 12228 / 1C / PRS 101 / PAO1).